Consider the following 221-residue polypeptide: Thiol:disulfide interchange protein TlpA (221 aa).

Residues methionine 1–arginine 11 are Cytoplasmic-facing. Residues isoleucine 12 to leucine 35 traverse the membrane as a helical segment. Residues serine 36–leucine 221 are Periplasmic-facing. 2 cysteine pairs are disulfide-bonded: cysteine 45–cysteine 190 and cysteine 107–cysteine 110. One can recognise a Thioredoxin domain in the interval alanine 69–glycine 215.

This sequence belongs to the thioredoxin family. In terms of assembly, monomer.

The protein resides in the cell membrane. Functionally, involved in cytochrome aa3 assembly. The sequence is that of Thiol:disulfide interchange protein TlpA (tlpA) from Bradyrhizobium diazoefficiens (strain JCM 10833 / BCRC 13528 / IAM 13628 / NBRC 14792 / USDA 110).